A 1259-amino-acid polypeptide reads, in one-letter code: Telomerase reverse transcriptase (1259 aa).

One can recognise a Reverse transcriptase domain in the interval 742–1067 (RGEPRKAVRH…SFMPWSGLLI (326 aa)). Positions 837, 999, and 1000 each coordinate Mg(2+).

It belongs to the reverse transcriptase family. Telomerase subfamily. In terms of assembly, component of the telomerase ribonucleoprotein complex. In terms of tissue distribution, expressed in shoot apices and immature embryos.

Its subcellular location is the nucleus. The protein localises to the chromosome. It is found in the telomere. The enzyme catalyses DNA(n) + a 2'-deoxyribonucleoside 5'-triphosphate = DNA(n+1) + diphosphate. Its function is as follows. Telomerase is a ribonucleoprotein enzyme essential for the replication of chromosome termini in most eukaryotes. It elongates telomeres. It is a reverse transcriptase that adds simple sequence repeats to chromosome ends by copying a template sequence within the RNA component of the enzyme. The chain is Telomerase reverse transcriptase (TERT) from Oryza sativa subsp. japonica (Rice).